The sequence spans 177 residues: uncharacterized protein (177 aa).

It localises to the plastid. Its subcellular location is the chloroplast. This is an uncharacterized protein from Chlorella vulgaris (Green alga).